We begin with the raw amino-acid sequence, 586 residues long: Arginine--tRNA ligase (586 aa).

Positions 133–143 (ANPTGPLNIVS) match the 'HIGH' region motif.

It belongs to the class-I aminoacyl-tRNA synthetase family. In terms of assembly, monomer.

The protein localises to the cytoplasm. It carries out the reaction tRNA(Arg) + L-arginine + ATP = L-arginyl-tRNA(Arg) + AMP + diphosphate. This chain is Arginine--tRNA ligase, found in Leptospira interrogans serogroup Icterohaemorrhagiae serovar copenhageni (strain Fiocruz L1-130).